The primary structure comprises 511 residues: MDIRPAEISDILKQQIASFDQVETVSETGTVLSIGDGIARVYGLTNVMAGEMVEFEGTGLKGMALNLEADNVGVVLFGDGDSIREGDTVLRTKSVVEVPVGKGLLGRVVDGLGNPIDGRGPLTDVEYRRAEVKAPGIMPRQSVSEPMQTGIKAIDALVPIGRGQRELIIGDRQTGKTAILIDTIVAQKPVNAEGDPKKSLYCIYVAVGQKRSTVANLVRTLIEHGAMEYSIVVAATASDAAPMQYLAPYTACAMGEYFRDNGMHALVCYDDLSKQAVAYRQMSLLLRRPPAREAFPGDVFYLHSRLLERAAKMSDANGGGSLTALPVIETQAGDTAAYIPTNVISITDGQIFLETDLFYRGIRPAVNVGGSVSRVGSAAQIKAMKQVAGKIKLELAQYREMAAFSQFASDLDAATRKQLDRGARLVELLKQPETSPLPVEEQVVVLYAGTRGYVDPIAVDKVVAYEAALLSELRGAGSDILTAIRNDRQIKPETEGKLKELLEAFGKRFSA.

Residue 170-177 (GDRQTGKT) coordinates ATP.

It belongs to the ATPase alpha/beta chains family. F-type ATPases have 2 components, CF(1) - the catalytic core - and CF(0) - the membrane proton channel. CF(1) has five subunits: alpha(3), beta(3), gamma(1), delta(1), epsilon(1). CF(0) has three main subunits: a(1), b(2) and c(9-12). The alpha and beta chains form an alternating ring which encloses part of the gamma chain. CF(1) is attached to CF(0) by a central stalk formed by the gamma and epsilon chains, while a peripheral stalk is formed by the delta and b chains.

Its subcellular location is the cell inner membrane. The enzyme catalyses ATP + H2O + 4 H(+)(in) = ADP + phosphate + 5 H(+)(out). In terms of biological role, produces ATP from ADP in the presence of a proton gradient across the membrane. The alpha chain is a regulatory subunit. The protein is ATP synthase subunit alpha 1 of Gluconobacter oxydans (strain 621H) (Gluconobacter suboxydans).